The sequence spans 124 residues: Glycine cleavage system H protein (124 aa).

Residues 22–104 (LVITGITDHA…YGKGWIYKIK (83 aa)) form the Lipoyl-binding domain. K63 carries the N6-lipoyllysine modification.

This sequence belongs to the GcvH family. The glycine cleavage system is composed of four proteins: P, T, L and H. (R)-lipoate is required as a cofactor.

Functionally, the glycine cleavage system catalyzes the degradation of glycine. The H protein shuttles the methylamine group of glycine from the P protein to the T protein. This chain is Glycine cleavage system H protein, found in Acinetobacter baumannii (strain SDF).